The following is a 3658-amino-acid chain: Serine/threonine-protein kinase SMG1 (3658 aa).

Disordered stretches follow at residues 1-99 (MSRR…TYGR) and 116-142 (FTSVQHGSRALATKDMRKSQERSMSYS). A compositionally biased stretch (polar residues) spans 24-33 (NDWQPRTDSA). 2 stretches are compositionally biased toward basic and acidic residues: residues 67–84 (QRHDDTRGHADIQNDEKG) and 127–136 (ATKDMRKSQE). Lys-171 carries the N6-acetyllysine modification. Residues 1281–1864 (RELQKSIEVQ…LYPAIVGTIS (584 aa)) enclose the FAT domain. One copy of the HEAT repeat lies at 1815 to 1850 (APWRGIIPQLFSRLNHPEVYVRQSICNLLCRVAQDS). Residues 1896-1917 (ECEGGSPPASQDSNKDEPKSGL) are disordered. The region spanning 2122 to 2461 (VGGTITILPT…MEREITRSLF (340 aa)) is the PI3K/PI4K catalytic domain. Residues 2128 to 2134 (ILPTKTK) form a G-loop region. Positions 2330-2338 (GLGDRHLDN) are catalytic loop. The activation loop stretch occupies residues 2350–2374 (HIDYNVCFEKGKSLRVPEKVPFRMT). At Thr-3547 the chain carries Phosphothreonine. Residues Ser-3553 and Ser-3567 each carry the phosphoserine modification. Residues 3565-3576 (ATSADTPPSTIP) show a composition bias toward polar residues. The tract at residues 3565-3588 (ATSADTPPSTIPGTGKSIACSPKK) is disordered. Thr-3570 and Thr-3574 each carry phosphothreonine. Residues 3626 to 3658 (RRMSVAEQVDYVIKEATNLDNLAQLYEGWTAWV) form the FATC domain.

This sequence belongs to the PI3/PI4-kinase family. As to quaternary structure, component of the SMG1C complex composed of SMG1, SMG8 and SMG9; the recruitment of SMG8 to SMG1 N-terminus induces a large conformational change in the SMG1 C-terminal head domain containing the catalytic domain. Component of the transient SURF (SMG1-UPF1-eRF1-eRF3) complex. Part of a complex composed of SMG1, DHX34 and UPF1; within the complex DHX34 acts as a scaffolding protein to facilitate SMG1 phosphorylation of UPF1. Interacts with PRKCI. Interacts with TELO2 and TTI1. Interacts with RUVBL1 and RUVBL2. Interacts with DHX34 (via C-terminus); the interaction is RNA-independent. The cofactor is Mn(2+). In terms of processing, autophosphorylated.

The protein resides in the nucleus. It is found in the cytoplasm. It catalyses the reaction L-seryl-[protein] + ATP = O-phospho-L-seryl-[protein] + ADP + H(+). The catalysed reaction is L-threonyl-[protein] + ATP = O-phospho-L-threonyl-[protein] + ADP + H(+). Inhibited by caffeine, LY294002 and wortmannin. In terms of biological role, serine/threonine protein kinase involved in both mRNA surveillance and genotoxic stress response pathways. Recognizes the substrate consensus sequence [ST]-Q. Plays a central role in nonsense-mediated decay (NMD) of mRNAs containing premature stop codons by phosphorylating UPF1/RENT1. Recruited by release factors to stalled ribosomes together with SMG8 and SMG9 (forming the SMG1C protein kinase complex), and UPF1 to form the transient SURF (SMG1-UPF1-eRF1-eRF3) complex. In EJC-dependent NMD, the SURF complex associates with the exon junction complex (EJC) through UPF2 and allows the formation of an UPF1-UPF2-UPF3 surveillance complex which is believed to activate NMD. Also acts as a genotoxic stress-activated protein kinase that displays some functional overlap with ATM. Can phosphorylate p53/TP53 and is required for optimal p53/TP53 activation after cellular exposure to genotoxic stress. Its depletion leads to spontaneous DNA damage and increased sensitivity to ionizing radiation (IR). May activate PRKCI but not PRKCZ. This chain is Serine/threonine-protein kinase SMG1, found in Mus musculus (Mouse).